Here is a 337-residue protein sequence, read N- to C-terminus: Phosphate acyltransferase (337 aa).

This sequence belongs to the PlsX family. As to quaternary structure, homodimer. Probably interacts with PlsY.

The protein resides in the cytoplasm. The catalysed reaction is a fatty acyl-[ACP] + phosphate = an acyl phosphate + holo-[ACP]. Its pathway is lipid metabolism; phospholipid metabolism. In terms of biological role, catalyzes the reversible formation of acyl-phosphate (acyl-PO(4)) from acyl-[acyl-carrier-protein] (acyl-ACP). This enzyme utilizes acyl-ACP as fatty acyl donor, but not acyl-CoA. This is Phosphate acyltransferase from Ehrlichia chaffeensis (strain ATCC CRL-10679 / Arkansas).